A 132-amino-acid polypeptide reads, in one-letter code: uncharacterized protein (132 aa).

This is an uncharacterized protein from Botryotinia fuckeliana (Noble rot fungus).